Here is an 89-residue protein sequence, read N- to C-terminus: DNA/RNA-binding protein Alba (89 aa).

Belongs to the histone-like Alba family.

The protein localises to the cytoplasm. It is found in the chromosome. In terms of biological role, binds double-stranded DNA tightly but without sequence specificity. Involved in DNA compaction. This chain is DNA/RNA-binding protein Alba, found in Methanothrix thermoacetophila (strain DSM 6194 / JCM 14653 / NBRC 101360 / PT) (Methanosaeta thermophila).